The chain runs to 817 residues: Leucine--tRNA ligase (817 aa).

The short motif at 42-52 is the 'HIGH' region element; it reads PYPSGKLHMGH. Residues 576–580 carry the 'KMSKS' region motif; sequence KMSKS. Position 579 (K579) interacts with ATP.

This sequence belongs to the class-I aminoacyl-tRNA synthetase family.

The protein localises to the cytoplasm. It catalyses the reaction tRNA(Leu) + L-leucine + ATP = L-leucyl-tRNA(Leu) + AMP + diphosphate. The sequence is that of Leucine--tRNA ligase from Methylobacillus flagellatus (strain ATCC 51484 / DSM 6875 / VKM B-1610 / KT).